Here is a 712-residue protein sequence, read N- to C-terminus: Polyphosphate kinase (712 aa).

Asn-49 is an ATP binding site. Mg(2+)-binding residues include Arg-398 and Arg-428. The active-site Phosphohistidine intermediate is His-458. ATP contacts are provided by Tyr-491, Arg-587, and His-615.

It belongs to the polyphosphate kinase 1 (PPK1) family. Mg(2+) serves as cofactor. An intermediate of this reaction is the autophosphorylated ppk in which a phosphate is covalently linked to a histidine residue through a N-P bond.

It catalyses the reaction [phosphate](n) + ATP = [phosphate](n+1) + ADP. Its function is as follows. Catalyzes the reversible transfer of the terminal phosphate of ATP to form a long-chain polyphosphate (polyP). The protein is Polyphosphate kinase of Prochlorococcus marinus (strain MIT 9313).